The primary structure comprises 198 residues: Adenine phosphoribosyltransferase (198 aa).

It belongs to the purine/pyrimidine phosphoribosyltransferase family. In terms of assembly, homodimer.

It is found in the cytoplasm. It carries out the reaction AMP + diphosphate = 5-phospho-alpha-D-ribose 1-diphosphate + adenine. It participates in purine metabolism; AMP biosynthesis via salvage pathway; AMP from adenine: step 1/1. Catalyzes a salvage reaction resulting in the formation of AMP, that is energically less costly than de novo synthesis. The sequence is that of Adenine phosphoribosyltransferase from Serratia proteamaculans (strain 568).